A 66-amino-acid chain; its full sequence is MNVTVMFLVLLLTMPLTDGFNIRAINGGELFGLVQRDAGNALDHGFYRRGDCPPWCVGARCRAGKC.

Positions 1 to 19 (MNVTVMFLVLLLTMPLTDG) are cleaved as a signal peptide. A propeptide spanning residues 20-47 (FNIRAINGGELFGLVQRDAGNALDHGFY) is cleaved from the precursor.

This sequence belongs to the conotoxin L superfamily. Contains 2 disulfide bonds. In terms of tissue distribution, expressed by the venom duct.

It localises to the secreted. This Californiconus californicus (California cone) protein is Conotoxin Cl14.1b.